We begin with the raw amino-acid sequence, 453 residues long: Tyrosine-protein phosphatase non-receptor type 18 (453 aa).

A Tyrosine-protein phosphatase domain is found at 26–291 (LAREFSDIKA…RFLYHTVAQL (266 aa)). Residues Asp-197, 229 to 235 (CSAGCGR), and Gln-276 each bind substrate. Cys-229 (phosphocysteine intermediate) is an active-site residue. Phosphotyrosine is present on residues Tyr-381 and Tyr-419. The tract at residues 384-453 (VAPRAQRPVA…RDPPAEWTRV (70 aa)) is disordered. A compositionally biased stretch (basic and acidic residues) spans 442–453 (GPRDPPAEWTRV).

Belongs to the protein-tyrosine phosphatase family. Non-receptor class 4 subfamily. In terms of assembly, interacts with PSTPIP1. In terms of tissue distribution, highest expression in bone marrow. Also expressed in kidney, lung, ovary, spleen, thymus and lymph node.

Its subcellular location is the nucleus. It is found in the cytoplasm. It catalyses the reaction O-phospho-L-tyrosyl-[protein] + H2O = L-tyrosyl-[protein] + phosphate. May be involved in growth and differentiation of hematopoietic cells. This chain is Tyrosine-protein phosphatase non-receptor type 18 (Ptpn18), found in Mus musculus (Mouse).